Consider the following 259-residue polypeptide: Ribonuclease HII (259 aa).

In terms of domain architecture, RNase H type-2 spans 72-259 (SYIAGIDEVG…PIKDMIKNKL (188 aa)). A divalent metal cation is bound by residues Asp-78, Glu-79, and Asp-170.

The protein belongs to the RNase HII family. Requires Mn(2+) as cofactor. The cofactor is Mg(2+).

Its subcellular location is the cytoplasm. It carries out the reaction Endonucleolytic cleavage to 5'-phosphomonoester.. In terms of biological role, endonuclease that specifically degrades the RNA of RNA-DNA hybrids. This chain is Ribonuclease HII, found in Bacillus cytotoxicus (strain DSM 22905 / CIP 110041 / 391-98 / NVH 391-98).